We begin with the raw amino-acid sequence, 389 residues long: Homoserine O-acetyltransferase (389 aa).

Residues 1–21 form a disordered region; sequence MAALRAGKTNNEADQPSSPVL. Residues 8–18 show a composition bias toward polar residues; the sequence is KTNNEADQPSS. Residues 56 to 366 form the AB hydrolase-1 domain; sequence NAILVCHALT…DRGHDAFLLD (311 aa). Catalysis depends on S161, which acts as the Nucleophile. R231 is a binding site for substrate. Active-site residues include D327 and H360. D361 contributes to the substrate binding site.

This sequence belongs to the AB hydrolase superfamily. MetX family. Homodimer.

It localises to the cytoplasm. It carries out the reaction L-homoserine + acetyl-CoA = O-acetyl-L-homoserine + CoA. It functions in the pathway amino-acid biosynthesis; L-methionine biosynthesis via de novo pathway; O-acetyl-L-homoserine from L-homoserine: step 1/1. Its function is as follows. Transfers an acetyl group from acetyl-CoA to L-homoserine, forming acetyl-L-homoserine. In Mesorhizobium japonicum (strain LMG 29417 / CECT 9101 / MAFF 303099) (Mesorhizobium loti (strain MAFF 303099)), this protein is Homoserine O-acetyltransferase.